The primary structure comprises 696 residues: PWWP domain-containing DNA repair factor 3B (696 aa).

Composition is skewed to polar residues over residues Q119–S128 and C290–M300. Disordered stretches follow at residues Q119–G143 and N278–E303. S128 is subject to Phosphoserine. The PWWP domain occupies T392–M453.

It belongs to the PWWP3A family.

The protein is PWWP domain-containing DNA repair factor 3B of Homo sapiens (Human).